A 220-amino-acid chain; its full sequence is V-set and transmembrane domain-containing protein 2-like protein (220 aa).

Positions 1 to 24 (MGAPLAAALGALHYLALFLQLGGA) are cleaved as a signal peptide. The Ig-like domain maps to 41–158 (ALFTETPHDM…DGGRGVPRVL (118 aa)). A disulfide bond links C62 and C142. Residues 165–180 (PAPPRAPRPRGQPPGE) are compositionally biased toward pro residues. A disordered region spans residues 165-220 (PAPPRAPRPRGQPPGEEPGRGPTLLFLIILPGTGSGTPREAEPHQPHAGGCPARQS).

The sequence is that of V-set and transmembrane domain-containing protein 2-like protein (Vstm2l) from Mus musculus (Mouse).